A 518-amino-acid chain; its full sequence is MTAYKPYRHQLRRSLFASTIFPVFLVIIIGLVSFYAIYIWIEHRTIHQHVDESQSSLHHTEKQIQTFITQHNNSFQELDLTNHHDVTATKRELLKLIHQQPATLYYELSGPNQFITNNYEHLNTKNMYLFSTHQLKFKNSTYMLKIYMANTPRLSEIKKDNRQFALIVDQYDNILYANDDRFTIGEKYRPQQFGFMNESVKLNHADHRLIIYKDIHENIEDGITLLIVMAVVLVLLVIFGFISADNMAKRQTKDIETIIQKIYYAKNRHLGTYTPLKNNSELEEINNYIYDLFESNEQLIHSIEHTERRLRDIQLKEIERQFQPHFLFNTMQTIQYLITLSPKLAQTVVQQLSQMLRYSLRTNSHTVELNEELNYIEQYVAIQNIRFDDMIKLHIESSEEARHQTIGKMMLQPLIENAIKHGRDTESLDITIRLTLARQNLHVLVCDNGIGMSSSRLQYVRQSLNNDVFDTKHLGLNHLHNKAMIQYGSHARLHIFSKRNQGTLICYKIPLSRGNVDV.

2 helical membrane-spanning segments follow: residues 20-40 (IFPV…IYIW) and 222-242 (GITL…FGFI). In terms of domain architecture, Histidine kinase spans 297–513 (EQLIHSIEHT…LICYKIPLSR (217 aa)). Histidine 325 is subject to Phosphohistidine; by autocatalysis.

Post-translationally, autophosphorylated.

The protein resides in the cell membrane. It carries out the reaction ATP + protein L-histidine = ADP + protein N-phospho-L-histidine.. Member of the two-component regulatory system HptS/HptR that regulates genes involved in hexose phosphate transport system in response to changes in extracellular phosphate sources. May act as a sensor protein kinase which is autophosphorylated at a histidine residue and transfers its phosphate group to the conserved aspartic acid residue in the regulatory domain of HptS. In turn, HptS antagonizes CcpA-dependent transcription of a subset of CcpA-regulated genes involved in antibiotic susceptibility. The sequence is that of Sensor protein kinase HptS (hptS) from Staphylococcus aureus (strain USA300).